Consider the following 254-residue polypeptide: D-aminoacyl-tRNA deacylase (254 aa).

The disordered stretch occupies residues 61-85 (KPTLTVHTPGNLTEDNSRGGNSEEI). Polar residues predominate over residues 65 to 84 (TVHTPGNLTEDNSRGGNSEE).

It belongs to the DtdA deacylase family. As to quaternary structure, monomer. Requires Zn(2+) as cofactor.

The catalysed reaction is a D-aminoacyl-tRNA + H2O = a tRNA + a D-alpha-amino acid + H(+). The enzyme catalyses glycyl-tRNA(Ala) + H2O = tRNA(Ala) + glycine + H(+). In terms of biological role, D-aminoacyl-tRNA deacylase with broad substrate specificity. By recycling D-aminoacyl-tRNA to D-amino acids and free tRNA molecules, this enzyme counteracts the toxicity associated with the formation of D-aminoacyl-tRNA entities in vivo. This is D-aminoacyl-tRNA deacylase from Methanococcus maripaludis (strain C5 / ATCC BAA-1333).